The sequence spans 448 residues: Phosphoglucosamine mutase (448 aa).

S102 serves as the catalytic Phosphoserine intermediate. Residues S102, D243, D245, and D247 each coordinate Mg(2+). Residue S102 is modified to Phosphoserine.

Belongs to the phosphohexose mutase family. The cofactor is Mg(2+). Activated by phosphorylation.

It catalyses the reaction alpha-D-glucosamine 1-phosphate = D-glucosamine 6-phosphate. Catalyzes the conversion of glucosamine-6-phosphate to glucosamine-1-phosphate. In Mycobacterium bovis (strain ATCC BAA-935 / AF2122/97), this protein is Phosphoglucosamine mutase.